The primary structure comprises 477 residues: Calcium/calmodulin-dependent protein kinase type 1G (477 aa).

In terms of domain architecture, Protein kinase spans 23–277 (FIFMEVLGSG…CEKALRHPWI (255 aa)). ATP is bound by residues 29–37 (LGSGAFSEV) and K52. Residue D143 is the Proton acceptor of the active site. The autoinhibitory domain stretch occupies residues 277 to 317 (IDGNTALHRDIYPSVSLQIQKNFAKSKWRQAFNAAAVVHHM). The interval 297-318 (KNFAKSKWRQAFNAAAVVHHMR) is calmodulin-binding. Residues 326–388 (SPSVRQEVEN…SRPSAPSGGR (63 aa)) are disordered. Residues 376 to 388 (SHSSRPSAPSGGR) are compositionally biased toward low complexity.

Belongs to the protein kinase superfamily. CAMK Ser/Thr protein kinase family. CaMK subfamily. May be prenylated on Cys-474. In terms of tissue distribution, highly expressed in brain, in neuronal cell bodies of the central nucleus of amygdala and ventromedial hypothalamic nucleus. Also detected in heart, testis, and kidney.

The protein resides in the cytoplasm. The protein localises to the golgi apparatus membrane. It localises to the cell membrane. The enzyme catalyses L-seryl-[protein] + ATP = O-phospho-L-seryl-[protein] + ADP + H(+). It catalyses the reaction L-threonyl-[protein] + ATP = O-phospho-L-threonyl-[protein] + ADP + H(+). With respect to regulation, activated by Ca(2+)/calmodulin. Binding of calmodulin is thought to result in a conformational change and leads to activation through phosphorylation by CAMKK1. Its function is as follows. Calcium/calmodulin-dependent protein kinase belonging to a proposed calcium-triggered signaling cascade. In vitro phosphorylates transcription factor CREB1. The protein is Calcium/calmodulin-dependent protein kinase type 1G (Camk1g) of Mus musculus (Mouse).